The sequence spans 603 residues: MTGMNDNNAAIPQQTPRKHALSSKVMQLFRSGSRSSRQGKASSNIQPPSNINTNVPSASKSAKFGLHTPTTATPRVVSNPSNTAGVSKPGMYMPEYYQSASPSHSSSSASLNNHIDINTSKSSSAASLTSSVSALSLSPTSAINISSKSLSPKFSHHSNSNTAITPAPTPTASNINNVNKITNTSAPICGRFLVHKDGTHEHHLKNAKRQEKLSTMIKNMVGASKLRGEAKSAVPDIIMDPKTTLKSNKNPPTLFAGFMKQVVDMDDKYPEGAPTSGALNCPERDIYRSDQKDSKNNTHNITTTKKDRQCFAEKYGRCQEVLGKGAFGVVRICQKKNVSSQDGNKSEKLYAVKEFKRRTSESAEKYSKRLTSEFCISSSLHHTNIVTTLDLFQDAKGEYCEVMEYCAGGDLFTLVVAAGKLEYMEADCFFKQLIRGVVYMHEMGVCHRDLKPENLLLTHDGVLKITDFGNSECFKMAWEKNIHLSGGVCGSSPYIAPEEYIKEEFDPRPVDIWACGVIYMAMRTGRQLWSSAEKDDPFYMNYLKGRKEKGGYEPIESLKRARCRNVIYSMLDPVPYRRINGKQILNSEWGREIKCCHNGRALK.

Polar residues-rich tracts occupy residues 1-15 (MTGM…PQQT), 30-60 (RSGS…SASK), and 68-85 (TPTT…NTAG). Disordered stretches follow at residues 1-86 (MTGM…TAGV), 150-171 (LSPK…PTPT), and 267-301 (DKYP…THNI). Residues 159 to 171 (NSNTAITPAPTPT) show a composition bias toward low complexity. Positions 282–296 (PERDIYRSDQKDSKN) are enriched in basic and acidic residues. A Protein kinase domain is found at 316–590 (GRCQEVLGKG…GKQILNSEWG (275 aa)). ATP-binding positions include 322–330 (LGKGAFGVV) and Lys353. The active-site Proton acceptor is the Asp449.

It belongs to the protein kinase superfamily. Ser/Thr protein kinase family.

The catalysed reaction is L-seryl-[protein] + ATP = O-phospho-L-seryl-[protein] + ADP + H(+). It catalyses the reaction L-threonyl-[protein] + ATP = O-phospho-L-threonyl-[protein] + ADP + H(+). Its function is as follows. Promotes K(+) uptake, by the potassium transporter TRK1-TRK2, which leads to the subsequent cellular resistance to toxic cations such as Na(+), Li(+) and Ca(2+). The polypeptide is Serine/threonine-protein kinase HAL4/SAT4 (SAT4) (Saccharomyces cerevisiae (strain ATCC 204508 / S288c) (Baker's yeast)).